The primary structure comprises 1564 residues: NACHT domain- and WD repeat-containing protein 1 (1564 aa).

One can recognise an NACHT domain in the interval 335 to 661 (TPLVLFGPPG…LLAIAHRQLV (327 aa)). Residue 341–348 (GPPGIGKT) participates in ATP binding. 14 WD repeats span residues 866–905 (GCHKGITAMAWGVEEKLLVIGTQDGIMAVWDMEEQHVIHM), 908–947 (GHTGEVRCVKIFAKGTLANSASKDYTLHLWNLLSGQEKFT), 956–994 (PAEPQIWNLHVDEAHKVVYSASGSKINAWNLETAEPVFH), 998–1037 (DASDPWMCMAVLASQATLLTVSRDGVVSLWSSATGKLQGK), 1044–1082 (KEETPTCAVSVQKQGKLVTGFSNGSISLVSSKGDRLLEK), 1083–1121 (LPDAVRFLVVSEDESLLAAGFGRSVRIFLADSRGFRRFM), 1126–1165 (EHEDMVETAVFGTENNLIITGSLDALIQVWSLSEQGTLLD), 1167–1207 (LEGV…RSRV), 1212–1251 (LDRTGLTAVSHNGSYVYFPKIGDKNKVTIWDLAEGEEQDS), 1253–1290 (DTSSEIRCLEVAEQRKLLFTGLVSGVVLVFPLNSRQDV), 1291–1327 (ICIPPPEARKAINCMSLSKCEDRLAIAYDNIVLVLDI), 1338–1376 (GPRYTFYTQLPETLSSVAILTDYRVVYSMTNGDLFLYEC), 1380–1418 (KAFPLETHRSRVACVEVSHKEQLVVSGSEDALLCLWDLQ), and 1425–1462 (EMSYTSSYCRGVQCACFSKDDKYVYVGLKDRSILVWSV).

In terms of assembly, may interact with HSP90AA1, HSP90AB1 and BAG2. In terms of tissue distribution, expressed at highest levels in prostate, followed by testis, retina, trachea and optic nerve. Also detected in brain, epididymis, lung, vagina and pituitary. In the prostate, tends to be up-regulated during malignant progression compared to normal epithelium (at protein level).

The protein localises to the cytoplasm. It localises to the cytosol. Functionally, may play a role in the control of androgen receptor (AR) protein steady-state levels. This Homo sapiens (Human) protein is NACHT domain- and WD repeat-containing protein 1 (NWD1).